Consider the following 131-residue polypeptide: Large ribosomal subunit protein bL19 (131 aa).

It belongs to the bacterial ribosomal protein bL19 family.

In terms of biological role, this protein is located at the 30S-50S ribosomal subunit interface and may play a role in the structure and function of the aminoacyl-tRNA binding site. This Synechococcus sp. (strain CC9902) protein is Large ribosomal subunit protein bL19.